A 222-amino-acid chain; its full sequence is Putative metal transport protein MJ1569 (222 aa).

A run of 6 helical transmembrane segments spans residues 3–23 (IPDGYLGPITCAFFYLIMIPI), 39–59 (LPLLGVLTAFSFLVMMFNLPV), 81–101 (WVATIAISIVLIIQAIFFGDG), 102–122 (GITCIGANCFNMGVVLPFVGY), 135–155 (VIASGIGAYVGIVAAAIVAGF), and 180–200 (AFAHLITAGPAAAVVTAIVVW).

Belongs to the CbiM family.

It is found in the cell membrane. Its function is as follows. May be involved in metal transport. This Methanocaldococcus jannaschii (strain ATCC 43067 / DSM 2661 / JAL-1 / JCM 10045 / NBRC 100440) (Methanococcus jannaschii) protein is Putative metal transport protein MJ1569.